Here is a 483-residue protein sequence, read N- to C-terminus: MAWRLTVPELQDQLQCPICLEVFKEPLMLQCGHSYCKDCLDNLSQHLDSELCCPVCRQSVDCSSSPPNVSLARVIDALRLPGDIEPTVCVHHRNPLSLFCEKDQEFICGLCGLLGSHQHHRVTPVSTVYSRMKEELAGRISELKEEHRNVEEHIGKLVNNRTRIINESDVFSWVIRREFQELHHLVDEEKARCLEGLEGHTRGLVASLDMQLEQAQGTQERLAQAEQVLEQFGNESHHEFIRFHSVASRAEVQQARPLEGVFSPISFKPALHQADIKLTVWKRLFRKVLPAPASLKLDPATAHPLLELSKGNTVVHCGLLAQRRASQPERFDYSTCVLASKGFSWGRHYWEVVVGSKSDWRLGVIKGTASRKGKLNKSPEHGVWLIGLKEGRVYEAFGCPRLPLPVAGHPHRIGVYLHYEQGELTFFDADRPDDLRTLYTFQADFQGKLYPILDTCWHERGSNSLPMVLPPPSGPGHFTLGQV.

Residues 16 to 57 (CPICLEVFKEPLMLQCGHSYCKDCLDNLSQHLDSELCCPVCR) form an RING-type zinc finger. A B box-type zinc finger spans residues 84–125 (IEPTVCVHHRNPLSLFCEKDQEFICGLCGLLGSHQHHRVTPV). Residues C89, H92, C111, and H117 each coordinate Zn(2+). 2 coiled-coil regions span residues 127–169 (TVYS…NESD) and 203–236 (GLVA…GNES). One can recognise a B30.2/SPRY domain in the interval 275-474 (DIKLTVWKRL…LPMVLPPPSG (200 aa)). K372 carries the N6-acetyllysine modification.

The protein belongs to the TRIM/RBCC family. In terms of assembly, can form dimers and trimers. Interacts with several E2 ubiquitin-conjugating enzymes, including UBE2L6, UBE2E1, UBE2E3. No interaction with UBE2H. Interacts with BECN1. Interacts with SQSTM1. Interacts with NLRP3. Auto-ubiquitinated. Post-translationally, acetylated by EP300 and KAT2B. HDAC6 drives TRIM50 deacetylation. Acetylation antagonizes with TRIM50 ubiquitination. Expressed in the stomach.

It is found in the cytoplasm. The enzyme catalyses S-ubiquitinyl-[E2 ubiquitin-conjugating enzyme]-L-cysteine + [acceptor protein]-L-lysine = [E2 ubiquitin-conjugating enzyme]-L-cysteine + N(6)-ubiquitinyl-[acceptor protein]-L-lysine.. Its function is as follows. E3 ubiquitin-protein ligase that ubiquitinates Beclin-1/BECN1 in a 'Lys-63'-dependent manner enhancing its binding to ULK1. In turn, promotes starvation-induced autophagy activation. Also interacts with p62/SQSTM1 protein and thereby induces the formation and the autophagy clearance of aggresome-associated polyubiquitinated proteins through HDAC6 interaction. Also promotes NLRP3 inflammasome activation by directly inducing NLRP3 oligomerization independent of its E3 ligase function. The chain is E3 ubiquitin-protein ligase TRIM50 (Trim50) from Mus musculus (Mouse).